Consider the following 406-residue polypeptide: Cysteine desulfurase (406 aa).

N6-(pyridoxal phosphate)lysine is present on K226. C364 functions as the Cysteine persulfide intermediate in the catalytic mechanism.

Belongs to the class-V pyridoxal-phosphate-dependent aminotransferase family. Csd subfamily. In terms of assembly, homodimer. Interacts with SufE and the SufBCD complex composed of SufB, SufC and SufD. The interaction with SufE is required to mediate the direct transfer of the sulfur atom from the S-sulfanylcysteine. Requires pyridoxal 5'-phosphate as cofactor.

The protein resides in the cytoplasm. The enzyme catalyses (sulfur carrier)-H + L-cysteine = (sulfur carrier)-SH + L-alanine. It catalyses the reaction L-selenocysteine + AH2 = hydrogenselenide + L-alanine + A + H(+). It participates in cofactor biosynthesis; iron-sulfur cluster biosynthesis. Its function is as follows. Cysteine desulfurases mobilize the sulfur from L-cysteine to yield L-alanine, an essential step in sulfur metabolism for biosynthesis of a variety of sulfur-containing biomolecules. Component of the suf operon, which is activated and required under specific conditions such as oxidative stress and iron limitation. Acts as a potent selenocysteine lyase in vitro, that mobilizes selenium from L-selenocysteine. Selenocysteine lyase activity is however unsure in vivo. This is Cysteine desulfurase from Salmonella gallinarum (strain 287/91 / NCTC 13346).